A 233-amino-acid chain; its full sequence is Putative N-acetylmuramoyl-L-alanine amidase (233 aa).

In terms of domain architecture, MurNAc-LAA spans 1-219 (MIDPGHGGQD…IANAIYIALK (219 aa)).

The protein belongs to the N-acetylmuramoyl-L-alanine amidase 3 family.

The protein localises to the secreted. It carries out the reaction Hydrolyzes the link between N-acetylmuramoyl residues and L-amino acid residues in certain cell-wall glycopeptides.. In terms of biological role, cell-wall hydrolase involved in septum cleavage during cell division. In Buchnera aphidicola subsp. Schizaphis graminum (strain Sg), this protein is Putative N-acetylmuramoyl-L-alanine amidase (amiB).